We begin with the raw amino-acid sequence, 237 residues long: Uridylate kinase (237 aa).

Residue 12–15 (KLSG) participates in ATP binding. The interval 20–25 (GEDGLG) is involved in allosteric activation by GTP. UMP is bound at residue G54. ATP is bound by residues G55 and R59. UMP is bound by residues D74 and 135–142 (TGNPFFTT). T162, Y168, and D171 together coordinate ATP.

It belongs to the UMP kinase family. As to quaternary structure, homohexamer.

The protein localises to the cytoplasm. The enzyme catalyses UMP + ATP = UDP + ADP. It participates in pyrimidine metabolism; CTP biosynthesis via de novo pathway; UDP from UMP (UMPK route): step 1/1. Its activity is regulated as follows. Allosterically activated by GTP. Inhibited by UTP. Its function is as follows. Catalyzes the reversible phosphorylation of UMP to UDP. The protein is Uridylate kinase of Haemophilus influenzae (strain PittGG).